The primary structure comprises 183 residues: Glutathione-regulated potassium-efflux system ancillary protein KefG (183 aa).

The protein belongs to the NAD(P)H dehydrogenase (quinone) family. KefG subfamily. In terms of assembly, interacts with KefB.

It localises to the cell inner membrane. The catalysed reaction is a quinone + NADH + H(+) = a quinol + NAD(+). The enzyme catalyses a quinone + NADPH + H(+) = a quinol + NADP(+). In terms of biological role, regulatory subunit of a potassium efflux system that confers protection against electrophiles. Required for full activity of KefB. In Enterobacter sp. (strain 638), this protein is Glutathione-regulated potassium-efflux system ancillary protein KefG.